A 150-amino-acid polypeptide reads, in one-letter code: Large ribosomal subunit protein uL15 (150 aa).

The interval 1–52 (MITLNTLKDSTRKRKPRKRVGRGIGSKHGKTCGRGEKGAGARSGYKRRLGKE) is disordered. The segment covering 11 to 31 (TRKRKPRKRVGRGIGSKHGKT) has biased composition (basic residues).

Belongs to the universal ribosomal protein uL15 family. In terms of assembly, part of the 50S ribosomal subunit.

Binds to the 23S rRNA. This chain is Large ribosomal subunit protein uL15, found in Protochlamydia amoebophila (strain UWE25).